The following is a 267-amino-acid chain: Stage 0 sporulation protein A (267 aa).

The 119-residue stretch at lysine 5–serine 123 folds into the Response regulatory domain. Ca(2+) is bound by residues aspartate 10, aspartate 11, and aspartate 56. Aspartate 56 carries the post-translational modification 4-aspartylphosphate. The interval alanine 126–lysine 150 is disordered. The segment covering serine 135–glutamine 145 has biased composition (low complexity). The H-T-H motif DNA-binding region spans proline 199–histidine 218.

In terms of assembly, interacts with small protein YqaH, which is encoded in the skin prophage-like element. Ca(2+) serves as cofactor. Post-translationally, phosphorylated by KinA and KinB.

The protein resides in the cytoplasm. May play the central regulatory role in sporulation. It may be an element of the effector pathway responsible for the activation of sporulation genes in response to nutritional stress. Spo0A may act in concert with Spo0H (a sigma factor) to control the expression of some genes that are critical to the sporulation process. Repressor of abrB, activator of the spoIIa operon. Binds the DNA sequence 5'-TGNCGAA-3' (0A box). The protein is Stage 0 sporulation protein A (spo0A) of Bacillus subtilis (strain 168).